The sequence spans 175 residues: Crossover junction endodeoxyribonuclease RuvC (175 aa).

Catalysis depends on residues aspartate 7, glutamate 68, and aspartate 141. Aspartate 7, glutamate 68, and aspartate 141 together coordinate Mg(2+).

Belongs to the RuvC family. In terms of assembly, homodimer which binds Holliday junction (HJ) DNA. The HJ becomes 2-fold symmetrical on binding to RuvC with unstacked arms; it has a different conformation from HJ DNA in complex with RuvA. In the full resolvosome a probable DNA-RuvA(4)-RuvB(12)-RuvC(2) complex forms which resolves the HJ. The cofactor is Mg(2+).

It localises to the cytoplasm. The catalysed reaction is Endonucleolytic cleavage at a junction such as a reciprocal single-stranded crossover between two homologous DNA duplexes (Holliday junction).. The RuvA-RuvB-RuvC complex processes Holliday junction (HJ) DNA during genetic recombination and DNA repair. Endonuclease that resolves HJ intermediates. Cleaves cruciform DNA by making single-stranded nicks across the HJ at symmetrical positions within the homologous arms, yielding a 5'-phosphate and a 3'-hydroxyl group; requires a central core of homology in the junction. The consensus cleavage sequence is 5'-(A/T)TT(C/G)-3'. Cleavage occurs on the 3'-side of the TT dinucleotide at the point of strand exchange. HJ branch migration catalyzed by RuvA-RuvB allows RuvC to scan DNA until it finds its consensus sequence, where it cleaves and resolves the cruciform DNA. The sequence is that of Crossover junction endodeoxyribonuclease RuvC from Salinispora arenicola (strain CNS-205).